A 1487-amino-acid chain; its full sequence is Probable lysine-specific demethylase SE14 (1487 aa).

The interval 1–23 (MPPQPPPAASASASAPDPAVPAW) is disordered. The segment covering 9-22 (ASASASAPDPAVPA) has biased composition (low complexity). The region spanning 30 to 71 (APEYRPTESEFADPIAFLSRVEREAAAYGICKVIPPHPRPSR) is the JmjN domain. The segment covering 86-104 (CDAPAPSPAAASDSSIPPS) has biased composition (low complexity). The interval 86-113 (CDAPAPSPAAASDSSIPPSSSSPPPVSA) is disordered. In terms of domain architecture, JmjC spans 232–398 (NSPWNLQAIA…FAKEAAVRRA (167 aa)). Fe cation contacts are provided by His-275, Glu-277, and His-366. Disordered stretches follow at residues 494–555 (SCSK…DDGD) and 684–718 (YGDT…PDVE). Composition is skewed to basic and acidic residues over residues 498-507 (APEKKGEDGP) and 542-551 (QAPEGEKLDT). The C2H2-type 1; degenerate zinc finger occupies 1377–1400 (FQCDIEFCDMTFETKAELRAHQRN). C2H2-type zinc fingers lie at residues 1400-1424 (NICT…QCVH), 1430-1454 (FKCP…IRVH), and 1460-1486 (YKCS…KFNH).

The cofactor is Fe(2+).

It is found in the nucleus. Functionally, histone demethylase that demethylates 'Lys-4' (H3K4me) of histone H3. Involved in the control of flowering time. Has a suppressive effect on floral transition under long day conditions through the demethylation of H3K4me3 in the promoter region of the flower-promoting signal HD3B/RFT1. In Oryza sativa subsp. japonica (Rice), this protein is Probable lysine-specific demethylase SE14 (SE14).